Reading from the N-terminus, the 482-residue chain is Retrovirus-related Pol polyprotein from type-1 retrotransposable element R2 (482 aa).

One can recognise a Reverse transcriptase domain in the interval 1–84; sequence AYADDLILFA…DYFKYLGSRY (84 aa). A nucleic acid-binding endonuclease region spans residues 208 to 482; the sequence is QIPAVEKFYQ…ATGGRGRGDI (275 aa).

The catalysed reaction is DNA(n) + a 2'-deoxyribonucleoside 5'-triphosphate = DNA(n+1) + diphosphate. The sequence is that of Retrovirus-related Pol polyprotein from type-1 retrotransposable element R2 from Popillia japonica (Japanese beetle).